The chain runs to 94 residues: MLKPLGNRVIIEKKEQEQTTKSGIVLTDSAKEKSNEGVIIAVGQGRLLDNGTQVAPQVSEGDTIVFQQYAGTEVKRGDKTYLILNEEDILAIIE.

Belongs to the GroES chaperonin family. As to quaternary structure, heptamer of 7 subunits arranged in a ring. Interacts with the chaperonin GroEL.

The protein resides in the cytoplasm. In terms of biological role, together with the chaperonin GroEL, plays an essential role in assisting protein folding. The GroEL-GroES system forms a nano-cage that allows encapsulation of the non-native substrate proteins and provides a physical environment optimized to promote and accelerate protein folding. GroES binds to the apical surface of the GroEL ring, thereby capping the opening of the GroEL channel. The chain is Co-chaperonin GroES from Staphylococcus epidermidis (strain ATCC 35984 / DSM 28319 / BCRC 17069 / CCUG 31568 / BM 3577 / RP62A).